The chain runs to 167 residues: NAD(P)H-quinone oxidoreductase subunit I, chloroplastic (167 aa).

4Fe-4S ferredoxin-type domains lie at 55 to 84 (GRIHFEFDKCIACEVCVRVCPIDLPVVDWK) and 95 to 124 (LNYSIDFGICIFCGNCVEYCPTNCLSMTEE). The [4Fe-4S] cluster site is built by Cys64, Cys67, Cys70, Cys74, Cys104, Cys107, Cys110, and Cys114.

It belongs to the complex I 23 kDa subunit family. As to quaternary structure, NDH is composed of at least 16 different subunits, 5 of which are encoded in the nucleus. [4Fe-4S] cluster serves as cofactor.

It is found in the plastid. The protein localises to the chloroplast thylakoid membrane. The enzyme catalyses a plastoquinone + NADH + (n+1) H(+)(in) = a plastoquinol + NAD(+) + n H(+)(out). It catalyses the reaction a plastoquinone + NADPH + (n+1) H(+)(in) = a plastoquinol + NADP(+) + n H(+)(out). In terms of biological role, NDH shuttles electrons from NAD(P)H:plastoquinone, via FMN and iron-sulfur (Fe-S) centers, to quinones in the photosynthetic chain and possibly in a chloroplast respiratory chain. The immediate electron acceptor for the enzyme in this species is believed to be plastoquinone. Couples the redox reaction to proton translocation, and thus conserves the redox energy in a proton gradient. The protein is NAD(P)H-quinone oxidoreductase subunit I, chloroplastic of Panax ginseng (Korean ginseng).